The primary structure comprises 120 residues: U3-hexatoxin-Hi1a (120 aa).

The N-terminal stretch at 1–19 (MKLLYFFVVITVLVAVAAA) is a signal peptide. Residues 20-51 (LPAKTEEQIAAEENQLVEDLVQYAGTRLTRKR) constitute a propeptide that is removed on maturation.

This sequence belongs to the neurotoxin 25 family. F7 subfamily. Post-translationally, contains 4 disulfide bonds. In terms of tissue distribution, expressed by the venom gland.

Its subcellular location is the secreted. Weak insecticidal toxin with probable ion channel impairing activity. In vivo, induces paralysis when injected into sheep blowflies (L.cuprina). Shows weak toxicity, since it is only toxic at high doses, and flies recover within 24 hours. In Hadronyche infensa (Fraser island funnel-web spider), this protein is U3-hexatoxin-Hi1a.